The primary structure comprises 633 residues: Peptidoglycan D,D-transpeptidase MrdA (633 aa).

Residues 22–42 (LVAFLGILLLTGVLIANLYNL) traverse the membrane as a helical segment. Serine 330 functions as the Acyl-ester intermediate in the catalytic mechanism.

This sequence belongs to the transpeptidase family. MrdA subfamily.

The protein localises to the cell inner membrane. It catalyses the reaction Preferential cleavage: (Ac)2-L-Lys-D-Ala-|-D-Ala. Also transpeptidation of peptidyl-alanyl moieties that are N-acyl substituents of D-alanine.. It functions in the pathway cell wall biogenesis; peptidoglycan biosynthesis. In terms of biological role, catalyzes cross-linking of the peptidoglycan cell wall. The chain is Peptidoglycan D,D-transpeptidase MrdA from Escherichia coli O157:H7.